We begin with the raw amino-acid sequence, 244 residues long: Demethylmenaquinone methyltransferase (244 aa).

Residues threonine 65, aspartate 86, and 114–115 contribute to the S-adenosyl-L-methionine site; that span reads DA.

It belongs to the class I-like SAM-binding methyltransferase superfamily. MenG/UbiE family.

It carries out the reaction a 2-demethylmenaquinol + S-adenosyl-L-methionine = a menaquinol + S-adenosyl-L-homocysteine + H(+). The protein operates within quinol/quinone metabolism; menaquinone biosynthesis; menaquinol from 1,4-dihydroxy-2-naphthoate: step 2/2. Functionally, methyltransferase required for the conversion of demethylmenaquinol (DMKH2) to menaquinol (MKH2). The polypeptide is Demethylmenaquinone methyltransferase (Lactobacillus johnsonii (strain CNCM I-12250 / La1 / NCC 533)).